The sequence spans 89 residues: Small ribosomal subunit protein uS14 (89 aa).

This sequence belongs to the universal ribosomal protein uS14 family. Part of the 30S ribosomal subunit. Contacts proteins S3 and S10.

Binds 16S rRNA, required for the assembly of 30S particles and may also be responsible for determining the conformation of the 16S rRNA at the A site. The chain is Small ribosomal subunit protein uS14 from Chloroherpeton thalassium (strain ATCC 35110 / GB-78).